Reading from the N-terminus, the 436-residue chain is UDP-N-acetylmuramate--L-alanine ligase (436 aa).

ATP is bound at residue 110 to 116 (GAHGKTS).

The protein belongs to the MurCDEF family.

Its subcellular location is the cytoplasm. The catalysed reaction is UDP-N-acetyl-alpha-D-muramate + L-alanine + ATP = UDP-N-acetyl-alpha-D-muramoyl-L-alanine + ADP + phosphate + H(+). The protein operates within cell wall biogenesis; peptidoglycan biosynthesis. Functionally, cell wall formation. This Lacticaseibacillus paracasei (strain ATCC 334 / BCRC 17002 / CCUG 31169 / CIP 107868 / KCTC 3260 / NRRL B-441) (Lactobacillus paracasei) protein is UDP-N-acetylmuramate--L-alanine ligase.